The sequence spans 172 residues: Photosystem I assembly protein Ycf3 (172 aa).

3 TPR repeats span residues 35–68 (AFSYYRNGMSAQAEGEYAEALQNYYEAMRLEVDA), 72–105 (SYILYNIGLIHTSNGEHGRALEYYYQALERNPSL), and 120–153 (GEQAIENGQSEISQILFEKAADYWKEAIRLAPTN).

It belongs to the Ycf3 family.

It is found in the plastid. It localises to the chloroplast thylakoid membrane. Essential for the assembly of the photosystem I (PSI) complex. May act as a chaperone-like factor to guide the assembly of the PSI subunits. This is Photosystem I assembly protein Ycf3 from Chlamydomonas reinhardtii (Chlamydomonas smithii).